The sequence spans 501 residues: DELTA-alicitoxin-Pse2a (501 aa).

An N-terminal signal peptide occupies residues 1-22 (MSPYFKLSSALIFLAITMEALC). The propeptide occupies 23–35 (SPIENTSTSNKDN). Residues 23–359 (SPIENTSTSN…GFLHFGCSYL (337 aa)) enclose the MACPF domain. A coiled-coil region spans residues 135–159 (AAVTNNIASSEEEVQGLSLNLKAYS). The EGF-like domain occupies 388–422 (VCKVGPEGCQHHEDCHYRAAFWCECGGPYDLARTC). 3 disulfides stabilise this stretch: C389–C402, C396–C410, and C412–C422.

The protein resides in the secreted. It localises to the nematocyst. Causes lethal toxicity to the shrimp Palaemon paucidence, and hemolytic activity toward sheep red blood cells. This is DELTA-alicitoxin-Pse2a from Phyllodiscus semoni (Night anemone).